Consider the following 461-residue polypeptide: DNA polymerase delta subunit 3 (461 aa).

Disordered regions lie at residues Val-148 to Gly-229, Val-249 to Leu-380, and Tyr-399 to Lys-461. Residues Ala-155–Pro-172 show a composition bias toward polar residues. Basic and acidic residues predominate over residues Asp-205–Glu-214. Positions Ala-215 to Lys-228 are enriched in low complexity. Basic and acidic residues predominate over residues Lys-279 to Ser-304. Basic residues predominate over residues Gly-371–Leu-380. A compositionally biased stretch (basic and acidic residues) spans Val-427–Lys-436. The PIP-box signature appears at Gln-451 to Cys-458.

As to quaternary structure, component of both the DNA polymerase delta and DNA polymerase zeta complexes. The tetrameric DNA polymerase delta complex (Pol-delta4), which consists of POLD1/p125, POLD2/p50, POLD3/p66/p68 and POLD4/p12, with POLD1 bearing DNA polymerase and 3' to 5' proofreading exonuclease activities.

The protein localises to the cytoplasm. It is found in the nucleus. Functionally, accessory component of both the DNA polymerase delta complex and the DNA polymerase zeta complex. As a component of the trimeric and tetrameric DNA polymerase delta complexes (Pol-delta3 and Pol-delta4, respectively), plays a role in high fidelity genome replication, including in lagging strand synthesis, and repair. Required for optimal Pol-delta activity. Stabilizes the Pol-delta complex and plays a major role in Pol-delta stimulation by PCNA. Pol-delta3 and Pol-delta4 are characterized by the absence or the presence of POLD4. They exhibit differences in catalytic activity. Most notably, Pol-delta3 shows higher proofreading activity than Pol-delta4. Although both Pol-delta3 and Pol-delta4 process Okazaki fragments in vitro, Pol-delta3 may also be better suited to fulfill this task, exhibiting near-absence of strand displacement activity compared to Pol-delta4 and stalling on encounter with the 5'-blocking oligonucleotides. Pol-delta3 idling process may avoid the formation of a gap, while maintaining a nick that can be readily ligated. Along with DNA polymerase kappa, DNA polymerase delta carries out approximately half of nucleotide excision repair (NER) synthesis following UV irradiation. In this context, POLD3, along with PCNA and RFC1-replication factor C complex, is required to recruit POLD1, the catalytic subunit of the polymerase delta complex, to DNA damage sites. Under conditions of DNA replication stress, required for the repair of broken replication forks through break-induced replication (BIR). Involved in the translesion synthesis (TLS) of templates carrying O6-methylguanine or abasic sites performed by Pol-delta4, independently of DNA polymerase zeta (REV3L) or eta (POLH). Facilitates abasic site bypass by DNA polymerase delta by promoting extension from the nucleotide inserted opposite the lesion. Also involved in TLS, as a component of the tetrameric DNA polymerase zeta complex. Along with POLD2, dramatically increases the efficiency and processivity of DNA synthesis of the DNA polymerase zeta complex compared to the minimal zeta complex, consisting of only REV3L and REV7. This Gallus gallus (Chicken) protein is DNA polymerase delta subunit 3 (POLD3).